We begin with the raw amino-acid sequence, 142 residues long: Large ribosomal subunit protein uL11 (142 aa).

It belongs to the universal ribosomal protein uL11 family. In terms of assembly, part of the ribosomal stalk of the 50S ribosomal subunit. Interacts with L10 and the large rRNA to form the base of the stalk. L10 forms an elongated spine to which L12 dimers bind in a sequential fashion forming a multimeric L10(L12)X complex. Post-translationally, one or more lysine residues are methylated.

In terms of biological role, forms part of the ribosomal stalk which helps the ribosome interact with GTP-bound translation factors. The polypeptide is Large ribosomal subunit protein uL11 (Erwinia tasmaniensis (strain DSM 17950 / CFBP 7177 / CIP 109463 / NCPPB 4357 / Et1/99)).